The chain runs to 192 residues: Rho-related protein racC (192 aa).

GTP is bound at residue 13 to 20 (GDGAVGKT). An Effector region motif is present at residues 35-43 (YIPTVFDNY). GTP contacts are provided by residues 60 to 64 (DTAGQ) and 118 to 121 (TKLD). Cys189 is modified (cysteine methyl ester). Cys189 is lipidated: S-geranylgeranyl cysteine. Positions 190–192 (IVM) are cleaved as a propeptide — removed in mature form.

The protein belongs to the small GTPase superfamily. Rho family. In terms of assembly, interacts with pakB.

It localises to the cell membrane. The chain is Rho-related protein racC (racC) from Dictyostelium discoideum (Social amoeba).